The primary structure comprises 528 residues: U6 snRNA (guanine-N(2))-methyltransferase THUMPD2 (528 aa).

The span at Q154 to L168 shows a compositional bias: basic and acidic residues. 2 disordered regions span residues Q154–Q200 and M437–S460. Residues E162–L266 enclose the THUMP domain.

This sequence belongs to the methyltransferase superfamily. As to quaternary structure, part of the heterodimeric THUMPD2-TRM112 methyltransferase complex; this complex forms an active tRNA methyltransferase, where TRMT112 acts as an activator of the catalytic subunit THUMPD2.

It is found in the nucleus. The enzyme catalyses guanosine in U6 snRNA + S-adenosyl-L-methionine = N(2)-methylguanosine in U6 snRNA + S-adenosyl-L-homocysteine + H(+). Catalytic subunit of the THUMPD2-TRM112 methyltransferase complex, that specifically mediates the S-adenosyl-L-methionine-dependent N(2)-methylation of guanosine nucleotides, most probably at position 72 (m2G72), in the U6snRNA of the major spliceosome. This modification in the U6 snRNA affects the constitutive splicing efficiency of introns that have suboptimal splice sites and can impact final mRNA levels. The protein is U6 snRNA (guanine-N(2))-methyltransferase THUMPD2 of Mus musculus (Mouse).